A 262-amino-acid polypeptide reads, in one-letter code: Probable dihydroorotate dehydrogenase B (NAD(+)), electron transfer subunit (262 aa).

The FAD-binding FR-type domain maps to 4–97 (VKPIPAEVVE…RGPYGKPFEV (94 aa)). Residues cysteine 217, cysteine 222, cysteine 225, and cysteine 234 each coordinate [2Fe-2S] cluster.

The protein belongs to the PyrK family. Heterotetramer of 2 PyrK and 2 PyrD type B subunits. It depends on [2Fe-2S] cluster as a cofactor. FAD is required as a cofactor.

It participates in pyrimidine metabolism; UMP biosynthesis via de novo pathway; orotate from (S)-dihydroorotate (NAD(+) route): step 1/1. Functionally, responsible for channeling the electrons from the oxidation of dihydroorotate from the FMN redox center in the PyrD type B subunit to the ultimate electron acceptor NAD(+). The protein is Probable dihydroorotate dehydrogenase B (NAD(+)), electron transfer subunit of Methanopyrus kandleri (strain AV19 / DSM 6324 / JCM 9639 / NBRC 100938).